The chain runs to 547 residues: Glucose-6-phosphate isomerase (547 aa).

The active-site Proton donor is Glu-351. Catalysis depends on residues His-382 and Lys-510.

Belongs to the GPI family.

The protein localises to the cytoplasm. It catalyses the reaction alpha-D-glucose 6-phosphate = beta-D-fructose 6-phosphate. The protein operates within carbohydrate biosynthesis; gluconeogenesis. Its pathway is carbohydrate degradation; glycolysis; D-glyceraldehyde 3-phosphate and glycerone phosphate from D-glucose: step 2/4. Catalyzes the reversible isomerization of glucose-6-phosphate to fructose-6-phosphate. The sequence is that of Glucose-6-phosphate isomerase from Saccharophagus degradans (strain 2-40 / ATCC 43961 / DSM 17024).